A 584-amino-acid polypeptide reads, in one-letter code: Arginine--tRNA ligase (584 aa).

The short motif at 126–136 (PNIAKEMHVGH) is the 'HIGH' region element.

Belongs to the class-I aminoacyl-tRNA synthetase family. Monomer.

It localises to the cytoplasm. The catalysed reaction is tRNA(Arg) + L-arginine + ATP = L-arginyl-tRNA(Arg) + AMP + diphosphate. This is Arginine--tRNA ligase from Synechococcus sp. (strain ATCC 27144 / PCC 6301 / SAUG 1402/1) (Anacystis nidulans).